A 115-amino-acid polypeptide reads, in one-letter code: Large ribosomal subunit protein bL19 (115 aa).

It belongs to the bacterial ribosomal protein bL19 family.

This protein is located at the 30S-50S ribosomal subunit interface and may play a role in the structure and function of the aminoacyl-tRNA binding site. The chain is Large ribosomal subunit protein bL19 from Streptococcus pneumoniae serotype 2 (strain D39 / NCTC 7466).